Consider the following 116-residue polypeptide: Holo-[acyl-carrier-protein] synthase (116 aa).

2 residues coordinate Mg(2+): Asp8 and Glu59.

The protein belongs to the P-Pant transferase superfamily. AcpS family. Mg(2+) is required as a cofactor.

It is found in the cytoplasm. It carries out the reaction apo-[ACP] + CoA = holo-[ACP] + adenosine 3',5'-bisphosphate + H(+). Its function is as follows. Transfers the 4'-phosphopantetheine moiety from coenzyme A to a Ser of acyl-carrier-protein. The polypeptide is Holo-[acyl-carrier-protein] synthase (Staphylococcus saprophyticus subsp. saprophyticus (strain ATCC 15305 / DSM 20229 / NCIMB 8711 / NCTC 7292 / S-41)).